Reading from the N-terminus, the 157-residue chain is Ribosome maturation factor RimP (157 aa).

The protein belongs to the RimP family.

It is found in the cytoplasm. In terms of biological role, required for maturation of 30S ribosomal subunits. The protein is Ribosome maturation factor RimP of Limosilactobacillus reuteri (strain DSM 20016) (Lactobacillus reuteri).